The chain runs to 115 residues: MAFKVGCDNFSSSNFSTQVVCSPSGAALFCFEVLFSSTTGSSVDSESLERLFDGVAILLLLILLSLSNYYSIQLSNSYVLKYRVYTIKSHLIAKANIEKKKKKKKKKQIKNFQFG.

2 consecutive transmembrane segments (helical) span residues 15-35 and 52-72; these read FSTQVVCSPSGAALFCFEVLF and FDGVAILLLLILLSLSNYYSI.

The protein resides in the membrane. This is an uncharacterized protein from Saccharomyces cerevisiae (strain ATCC 204508 / S288c) (Baker's yeast).